The following is a 192-amino-acid chain: uncharacterized protein (192 aa).

This is an uncharacterized protein from Acanthamoeba polyphaga mimivirus (APMV).